We begin with the raw amino-acid sequence, 649 residues long: Probable ADP-ribosylation factor GTPase-activating protein AGD14 (649 aa).

The Arf-GAP domain occupies 12–130 (EKIIRGLMKL…KYAGANDADK (119 aa)). The segment at 27–50 (CINCNSLGPQYVCTTFWTFVCMAC) adopts a C4-type zinc-finger fold. Disordered regions lie at residues 124 to 159 (GAND…QSPP), 209 to 279 (FSNE…VRSV), 294 to 316 (LGEA…SNHV), and 366 to 391 (FTPA…SAPK). Residues 127–146 (DADKPSKDSQDHVSSEDMTR) are compositionally biased toward basic and acidic residues. Positions 150–159 (SYHSYSQSPP) are enriched in low complexity. Composition is skewed to polar residues over residues 248 to 257 (PQFQHSNAPP), 269 to 279 (RTTSSGSVRSV), 300 to 315 (ESRQ…TSNH), and 366 to 385 (FTPA…SRPS).

Functionally, GTPase-activating protein (GAP) for ADP ribosylation factor (ARF). This Arabidopsis thaliana (Mouse-ear cress) protein is Probable ADP-ribosylation factor GTPase-activating protein AGD14 (AGD14).